The primary structure comprises 679 residues: Single-strand DNA endonuclease ASTE1 (679 aa).

An interaction with SHLD2 region spans residues 351-400 (TILPTQVENMQQPNAHRISQPIRQIIYGLLLNASPHLDKTSWNALPPQPL). The disordered stretch occupies residues 625–645 (RSNSKKKRQKKQNTSCSKNRG). The span at 626–635 (SNSKKKRQKK) shows a compositional bias: basic residues.

It belongs to the asteroid family. Interacts with SHLD1, SHLD2, SHLD3, RIF1 and MAD2L2/REV7.

In terms of biological role, structure-specific DNA endonuclease that specifically cleaves single-stranded DNA and 3' overhang DNA. Contributes to the control of DNA double-strand break repair choice by antagonizing BRCA1-dependent homologous recombination (HR) and promoting non-homologous end-joining (NHEJ). Recruited to the single-stranded DNA ends by SHLD2 and cleaves the 3' exposed DNA ends, therefore inhibiting DNA end resection (necessary for HR) and promoting DNA end protection (necessary for NHEJ). This Homo sapiens (Human) protein is Single-strand DNA endonuclease ASTE1 (ASTE1).